Consider the following 259-residue polypeptide: 7-cyano-7-deazaguanine synthase (259 aa).

Position 32 to 42 (32 to 42) interacts with ATP; it reads LSGGLDSVTCL. The Zn(2+) site is built by C223, C233, C236, and C239.

This sequence belongs to the QueC family. Zn(2+) is required as a cofactor.

The enzyme catalyses 7-carboxy-7-deazaguanine + NH4(+) + ATP = 7-cyano-7-deazaguanine + ADP + phosphate + H2O + H(+). Its pathway is purine metabolism; 7-cyano-7-deazaguanine biosynthesis. Catalyzes the ATP-dependent conversion of 7-carboxy-7-deazaguanine (CDG) to 7-cyano-7-deazaguanine (preQ(0)). The polypeptide is 7-cyano-7-deazaguanine synthase (Psychrobacter arcticus (strain DSM 17307 / VKM B-2377 / 273-4)).